The chain runs to 268 residues: Undecaprenyl-diphosphatase (268 aa).

Helical transmembrane passes span phenylalanine 47 to leucine 67, phenylalanine 83 to lysine 103, leucine 109 to valine 129, tyrosine 144 to valine 164, alanine 184 to phenylalanine 204, leucine 218 to leucine 238, and phenylalanine 246 to leucine 266.

The protein belongs to the UppP family.

The protein resides in the cell inner membrane. The enzyme catalyses di-trans,octa-cis-undecaprenyl diphosphate + H2O = di-trans,octa-cis-undecaprenyl phosphate + phosphate + H(+). Its function is as follows. Catalyzes the dephosphorylation of undecaprenyl diphosphate (UPP). Confers resistance to bacitracin. In Bradyrhizobium sp. (strain ORS 278), this protein is Undecaprenyl-diphosphatase.